The primary structure comprises 526 residues: Light-independent protochlorophyllide reductase subunit B (526 aa).

Asp36 contacts [4Fe-4S] cluster. The Proton donor role is filled by Asp290. Residue 425–426 coordinates substrate; the sequence is GL.

This sequence belongs to the ChlB/BchB/BchZ family. In terms of assembly, protochlorophyllide reductase is composed of three subunits; ChlL, ChlN and ChlB. Forms a heterotetramer of two ChlB and two ChlN subunits. [4Fe-4S] cluster is required as a cofactor.

The catalysed reaction is chlorophyllide a + oxidized 2[4Fe-4S]-[ferredoxin] + 2 ADP + 2 phosphate = protochlorophyllide a + reduced 2[4Fe-4S]-[ferredoxin] + 2 ATP + 2 H2O. It participates in porphyrin-containing compound metabolism; chlorophyll biosynthesis (light-independent). Component of the dark-operative protochlorophyllide reductase (DPOR) that uses Mg-ATP and reduced ferredoxin to reduce ring D of protochlorophyllide (Pchlide) to form chlorophyllide a (Chlide). This reaction is light-independent. The NB-protein (ChlN-ChlB) is the catalytic component of the complex. This chain is Light-independent protochlorophyllide reductase subunit B, found in Prochlorococcus marinus (strain MIT 9515).